We begin with the raw amino-acid sequence, 427 residues long: Homogentisate 1,2-dioxygenase (427 aa).

The Proton acceptor role is filled by histidine 285. Histidine 328 and glutamate 334 together coordinate Fe cation. Tyrosine 343 and histidine 364 together coordinate homogentisate. Residue histidine 364 coordinates Fe cation.

It belongs to the homogentisate dioxygenase family. Hexamer; dimer of trimers. Requires Fe cation as cofactor.

The catalysed reaction is homogentisate + O2 = 4-maleylacetoacetate + H(+). Its pathway is amino-acid degradation; L-phenylalanine degradation; acetoacetate and fumarate from L-phenylalanine: step 4/6. In terms of biological role, involved in the catabolism of homogentisate (2,5-dihydroxyphenylacetate or 2,5-OH-PhAc), a central intermediate in the degradation of phenylalanine and tyrosine. Catalyzes the oxidative ring cleavage of the aromatic ring of homogentisate to yield maleylacetoacetate. The sequence is that of Homogentisate 1,2-dioxygenase from Caulobacter sp. (strain K31).